A 369-amino-acid polypeptide reads, in one-letter code: Protein RIC-3 (369 aa).

Residues 1–28 (MAYSTVQRVALASGLVLALSLLLPKAFL) form the signal peptide. Residues 29 to 95 (SRGKRQEPPP…AGGGGSGRGL (67 aa)) are Lumenal-facing. Residues 30–67 (RGKRQEPPPTPEGKLGRFPPMMHHHQAPSDGQTPGARF) are disordered. Residues 96-116 (MGQIIPIYGFGIFLYILYILF) traverse the membrane as a helical segment. Topologically, residues 117–369 (KLSKGKTTAE…LRKRNPQGLE (253 aa)) are cytoplasmic. The stretch at 140–169 (RKITSFELAQLQEKLKETEAAMEKLINRVG) forms a coiled coil. Lys202 carries the N6-acetyllysine; alternate modification. A Glycyl lysine isopeptide (Lys-Gly) (interchain with G-Cter in ubiquitin); alternate cross-link involves residue Lys202. Disordered regions lie at residues 272 to 295 (ESDH…SVTS) and 316 to 369 (LAEN…QGLE). Residues 332-346 (ETTKEEWSQDFKDEG) show a composition bias toward basic and acidic residues. Basic residues predominate over residues 360-369 (LRKRNPQGLE).

The protein belongs to the ric-3 family. As to quaternary structure, monomer and homodimer. Interacts with CHRNA7, CHRNA3, CHRNA4, CHRNB2, CHRNB4 and HTR3A. In terms of tissue distribution, broadly expressed, with high levels in muscle, brain, heart, pancreas and testis. In the central nervous system, highest levels are detected in the cerebellum and pituitary gland. Over-expressed in brains from patients with bipolar disease or schizophrenia. Isoform 5 is predominantly expressed in the brain.

It localises to the endoplasmic reticulum membrane. The protein localises to the golgi apparatus membrane. Functionally, molecular chaperone which facilitates proper subunit assembly and surface trafficking of alpha-7 (CHRNA7) and alpha-8 (CHRNA8) nicotinic acetylcholine receptors. May also promote functional expression of homomeric serotoninergic 5-HT3 receptors, and of heteromeric acetylcholine receptors alpha-3/beta-2, alpha-3/beta-4, alpha-4/beta-2 and alpha-4/beta-4. The polypeptide is Protein RIC-3 (RIC3) (Homo sapiens (Human)).